The chain runs to 295 residues: Ribosomal RNA small subunit methyltransferase H (295 aa).

S-adenosyl-L-methionine contacts are provided by residues 35–37 (GGH), E55, F82, D103, and Q110.

It belongs to the methyltransferase superfamily. RsmH family.

The protein localises to the cytoplasm. The catalysed reaction is cytidine(1402) in 16S rRNA + S-adenosyl-L-methionine = N(4)-methylcytidine(1402) in 16S rRNA + S-adenosyl-L-homocysteine + H(+). Specifically methylates the N4 position of cytidine in position 1402 (C1402) of 16S rRNA. The polypeptide is Ribosomal RNA small subunit methyltransferase H (Desulfotalea psychrophila (strain LSv54 / DSM 12343)).